The following is a 95-amino-acid chain: Aspartyl/glutamyl-tRNA(Asn/Gln) amidotransferase subunit C (95 aa).

The protein belongs to the GatC family. Heterotrimer of A, B and C subunits.

The catalysed reaction is L-glutamyl-tRNA(Gln) + L-glutamine + ATP + H2O = L-glutaminyl-tRNA(Gln) + L-glutamate + ADP + phosphate + H(+). It catalyses the reaction L-aspartyl-tRNA(Asn) + L-glutamine + ATP + H2O = L-asparaginyl-tRNA(Asn) + L-glutamate + ADP + phosphate + 2 H(+). Functionally, allows the formation of correctly charged Asn-tRNA(Asn) or Gln-tRNA(Gln) through the transamidation of misacylated Asp-tRNA(Asn) or Glu-tRNA(Gln) in organisms which lack either or both of asparaginyl-tRNA or glutaminyl-tRNA synthetases. The reaction takes place in the presence of glutamine and ATP through an activated phospho-Asp-tRNA(Asn) or phospho-Glu-tRNA(Gln). The chain is Aspartyl/glutamyl-tRNA(Asn/Gln) amidotransferase subunit C from Chlorobium phaeobacteroides (strain BS1).